The sequence spans 221 residues: Endonuclease V (221 aa).

Residues D43 and D109 each coordinate Mg(2+).

Belongs to the endonuclease V family. Requires Mg(2+) as cofactor.

The protein localises to the cytoplasm. It carries out the reaction Endonucleolytic cleavage at apurinic or apyrimidinic sites to products with a 5'-phosphate.. Functionally, DNA repair enzyme involved in the repair of deaminated bases. Selectively cleaves double-stranded DNA at the second phosphodiester bond 3' to a deoxyinosine leaving behind the intact lesion on the nicked DNA. This chain is Endonuclease V, found in Petrotoga mobilis (strain DSM 10674 / SJ95).